The following is a 420-amino-acid chain: Maturation protein A2 (420 aa).

3 RNA-binding regions span residues 158-176, 226-236, and 294-298; these read IKYL…RAVK, QNRHDKIQRLL, and PVSDW.

This sequence belongs to the Leviviricetes maturation protein family. Interacts with host MurA; this interaction inhibits the first step in host cell wall synthesis. Interacts with the capsid protein.

The protein localises to the virion. Induces host cell lysis. Inhibits host MurA activity thereby blocking the synthesis of murein precursors necessary for the host cell wall biosynthesis. May be responsible for the attachment to the host pilus. Makes extensive contacts with the viral genome. This chain is Maturation protein A2, found in Escherichia virus Qbeta (Bacteriophage Q-beta).